The primary structure comprises 247 residues: Anionic trypsin (247 aa).

The first 15 residues, 1–15 (MHPLLILAFVGAAVA), serve as a signal peptide directing secretion. Positions 16–23 (FPSDDDDK) are cleaved as a propeptide — activation peptide. One can recognise a Peptidase S1 domain in the interval 24 to 244 (IVGGYTCAEN…YVDWIQETIA (221 aa)). Disulfide bonds link C30-C160, C48-C64, C132-C233, C139-C206, C171-C185, and C196-C220. H63 serves as the catalytic Charge relay system. E75, N77, V80, and E85 together coordinate Ca(2+). Catalysis depends on D107, which acts as the Charge relay system. Residue S200 is the Charge relay system of the active site.

Belongs to the peptidase S1 family. Requires Ca(2+) as cofactor. In terms of processing, not sulfated on tyrosine residue(s).

It is found in the secreted. The protein resides in the extracellular space. The catalysed reaction is Preferential cleavage: Arg-|-Xaa, Lys-|-Xaa.. The chain is Anionic trypsin from Bos taurus (Bovine).